Reading from the N-terminus, the 550-residue chain is Transcription factor 7-like 1-D (550 aa).

Positions 1–61 (MPQLNSGXGD…SENHSSDSDS (61 aa)) are interaction with CTNNB1-A. Disordered stretches follow at residues 1–77 (MPQL…EKPR), 182–212 (GTPP…PYYP), 390–473 (WSAR…SLTT), and 488–514 (ASKS…SRPI). 2 stretches are compositionally biased toward basic and acidic residues: residues 17 to 32 (ELIR…EKSP) and 52 to 77 (SENH…EKPR). An interaction with AES and TLE4-A region spans residues 109–311 (LGGITCPMVP…SPNLSMKSNV (203 aa)). Positions 323–391 (IKKPLNAFML…LHSQLYPSWS (69 aa)) form a DNA-binding region, HMG box. Over residues 406–415 (KQSPEMENYT) the composition is skewed to basic and acidic residues. The interaction with CTBP-B stretch occupies residues 407–550 (QSPEMENYTK…PLPLVARSSD (144 aa)). Residues 444–455 (SPATPSAALASP) show a composition bias toward low complexity.

The protein belongs to the TCF/LEF family. Interacts with csnk1e, ctnnb1-A, ctbp-B, dact1-A and gsk3b. May interact with ase and tle4-A. Post-translationally, phosphorylated. Phosphorylation by csnk1e promotes binding to ctnnb1-A while phosphorylation by gsk3b may reverse this effect.

The protein resides in the nucleus. Functionally, participates in the Wnt signaling pathway. Binds to DNA and acts as a repressor in the absence of ctnnb1-A and possibly ctnnb1-B, and as an activator in the presence of these proteins. Required early in development for the establishment of the dorsal body axis in response to maternal Wnt signaling. This is Transcription factor 7-like 1-D (tcf7l1-d) from Xenopus laevis (African clawed frog).